The following is a 961-amino-acid chain: Translation initiation factor IF-2 (961 aa).

Residues 146–158 (PSVPNKTLTTTPH) show a composition bias toward polar residues. Residues 146–373 (PSVPNKTLTT…KTTSQVTTQP (228 aa)) form a disordered region. A compositionally biased stretch (basic and acidic residues) spans 163 to 176 (NHSEKDVLESHDSS). The segment covering 177 to 187 (NKNIKQSSSQN) has biased composition (low complexity). The span at 230-239 (SEEKNVDIQQ) shows a compositional bias: basic and acidic residues. 2 stretches are compositionally biased toward polar residues: residues 241–285 (EIPS…TAPH) and 301–310 (YQGQNRNNFI). Basic residues predominate over residues 355–364 (NRGRKRHKQK). The region spanning 460–627 (RRPPVVTIMG…LLALQTDILE (168 aa)) is the tr-type G domain. A G1 region spans residues 469–476 (GHVDHGKT). Position 469–476 (469–476 (GHVDHGKT)) interacts with GTP. The G2 stretch occupies residues 494-498 (GITQH). The segment at 515 to 518 (DTPG) is G3. GTP contacts are provided by residues 515–519 (DTPGH) and 569–572 (NKMD). Positions 569–572 (NKMD) are G4. The interval 605-607 (SAK) is G5.

The protein belongs to the TRAFAC class translation factor GTPase superfamily. Classic translation factor GTPase family. IF-2 subfamily.

The protein localises to the cytoplasm. Its function is as follows. One of the essential components for the initiation of protein synthesis. Protects formylmethionyl-tRNA from spontaneous hydrolysis and promotes its binding to the 30S ribosomal subunits. Also involved in the hydrolysis of GTP during the formation of the 70S ribosomal complex. The sequence is that of Translation initiation factor IF-2 from Lawsonia intracellularis (strain PHE/MN1-00).